The chain runs to 315 residues: Methionyl-tRNA formyltransferase (315 aa).

113–116 (SLLP) lines the (6S)-5,6,7,8-tetrahydrofolate pocket.

The protein belongs to the Fmt family.

The catalysed reaction is L-methionyl-tRNA(fMet) + (6R)-10-formyltetrahydrofolate = N-formyl-L-methionyl-tRNA(fMet) + (6S)-5,6,7,8-tetrahydrofolate + H(+). Functionally, attaches a formyl group to the free amino group of methionyl-tRNA(fMet). The formyl group appears to play a dual role in the initiator identity of N-formylmethionyl-tRNA by promoting its recognition by IF2 and preventing the misappropriation of this tRNA by the elongation apparatus. This is Methionyl-tRNA formyltransferase from Shigella dysenteriae serotype 1 (strain Sd197).